Consider the following 271-residue polypeptide: Large ribosomal subunit protein uL2cz/uL2cy (271 aa).

2 disordered regions span residues 1–22 (MAKH…DRQV) and 223–271 (PVDH…RRRK).

Belongs to the universal ribosomal protein uL2 family. In terms of assembly, part of the 50S ribosomal subunit.

The protein resides in the plastid. It is found in the chloroplast. This chain is Large ribosomal subunit protein uL2cz/uL2cy (rpl2-A), found in Sorghum bicolor (Sorghum).